Reading from the N-terminus, the 468-residue chain is Protein maelstrom 2 (468 aa).

The HMG box DNA-binding region spans 2 to 69 (PPKKHSGFMM…LTRVKKERLN (68 aa)). Residues 374 to 393 (KEDSPTVLSPASSRRSLASS) form a disordered region. The span at 381–393 (LSPASSRRSLASS) shows a compositional bias: low complexity.

It belongs to the maelstrom family.

The protein localises to the cytoplasm. It localises to the nucleus. Its function is as follows. Involved both in the piRNA and miRNA metabolic processes. As a component of the meiotic nuage, plays a central role during oogenesis by repressing transposable elements and preventing their mobilization, which is essential for the germline integrity. Repression of transposable elements is mediated via the piRNA metabolic process, which mediates the repression of transposable elements during meiosis by forming complexes composed of piRNAs and Piwi proteins and governs the repression of transposons. As a nuclear component, it is required for proper differentiation in the germline stem cell (GSC) lineage by repressing microRNA-7 (miR-7), thereby acting as an indirect regulator of bag-of-marbles (Bam). Acts by binding to the promoter of miR-7 gene and repressing its expression; miR-7 repression alleviates the Bam repression by miR-7, thereby allowing differentiation in the germline stem cell (GSC) lineage. This Drosophila ananassae (Fruit fly) protein is Protein maelstrom 2 (mael2).